The chain runs to 462 residues: Glycerol-3-phosphate dehydrogenase [NAD(+)] GPDHC1, cytosolic (462 aa).

NAD(+)-binding positions include 48–53 (GAGAWG), Lys-196, and Ala-235. Lys-196 serves as a coordination point for substrate. Catalysis depends on Lys-285, which acts as the Proton acceptor. 2 residues coordinate NAD(+): Arg-347 and Gln-375. Substrate is bound at residue 347-348 (RN).

The protein belongs to the NAD-dependent glycerol-3-phosphate dehydrogenase family. As to expression, expressed in roots, leaves, flowers and siliques.

It is found in the cytoplasm. The protein localises to the cytosol. It catalyses the reaction sn-glycerol 3-phosphate + NAD(+) = dihydroxyacetone phosphate + NADH + H(+). In terms of biological role, involved in cell redox homeostasis. Required for maintaining a steady state cellular NADH/NAD(+) ratio through a mitochondrial glycerol-3-phosphate redox shuttle. May function with the mitochondrial FAD-dependent glycerol-3-phosphate dehydrogenase SDP6 to shuttle reducing equivalents into the mitochondria for respiration. The protein is Glycerol-3-phosphate dehydrogenase [NAD(+)] GPDHC1, cytosolic (GPDHC1) of Arabidopsis thaliana (Mouse-ear cress).